Reading from the N-terminus, the 1559-residue chain is Bile pigment transporter 1 (1559 aa).

Over 1-29 (MSSLEVVDGCPYGYRPYPDSGTNALNPCF) the chain is Vacuolar. Residues 30–50 (ISVISAWQAVFFLLIGSYQLW) form a helical membrane-spanning segment. Residues 51-84 (KLYKNNKVPPRFKNFPTLPSKINSRHLTHLTNVC) lie on the Cytoplasmic side of the membrane. A helical transmembrane segment spans residues 85-105 (FQSTLIICELALVSQSSDRVY). Topologically, residues 106–110 (PFILK) are vacuolar. A helical transmembrane segment spans residues 111-127 (KALYLNLLFNLGISLPT). The Cytoplasmic segment spans residues 128 to 139 (QYLAYFKSTFSM). A helical membrane pass occupies residues 140-160 (GNQLFYYMFQILLQLFLILQR). The Vacuolar portion of the chain corresponds to 161–178 (YYHGSSNERLTVISGQTA). Residues 179 to 199 (MILEVLLLFNSVAIFIYDLCI) form a helical membrane-spanning segment. Residues 200 to 283 (FEPINELSEY…WLNRNSLWRA (84 aa)) lie on the Cytoplasmic side of the membrane. The chain crosses the membrane as a helical span at residues 284 to 304 (IWKSFGRTISVAMLYETTSDL). Residues 292–578 (ISVAMLYETT…VPSMINTIIE (287 aa)) form the ABC transmembrane type-1 1 domain. The Vacuolar segment spans residues 305–333 (LSVVQPQFLRIFIDGLNPETSSKYPPLNG). The helical transmembrane segment at 334–354 (VFIALTLFVISVVSVFLTNQF) threads the bilayer. The Cytoplasmic portion of the chain corresponds to 355–410 (YIGIFEAGLGIRGSLASLVYQKSLRLTLAERNEKSTGDILNLMSVDVLRIQRFFEN). The helical transmembrane segment at 411-431 (AQTIIGAPIQIIVVLTSLYWL) threads the bilayer. The Vacuolar portion of the chain corresponds to 432–434 (LGK). Residues 435–455 (AVIGGLVTMAIMMPINAFLSR) form a helical membrane-spanning segment. At 456–518 (KVKKLSKTQM…NFRKIGIVSN (63 aa)) the chain is on the cytoplasmic side. A helical transmembrane segment spans residues 519-539 (LIYFAWNCVPLMVTCSTFGLF). Residues 540-560 (SLFSDSPLSPAIVFPSLSLFN) are Vacuolar-facing. Residues 561 to 581 (ILNSAIYSVPSMINTIIETSV) form a helical membrane-spanning segment. Residues 582–972 (SMERLKSFLL…VKTKIYLAYI (391 aa)) are Cytoplasmic-facing. The 233-residue stretch at 639 to 871 (LRTDEESIIG…KNNTSKLKKL (233 aa)) folds into the ABC transporter 1 domain. Ser645 bears the Phosphoserine mark. 672 to 679 (GRVGAGKS) contributes to the ATP binding site. The segment at 877-899 (SPIDNGNESDVQTEHRSESEVDE) is disordered. Ser885 is modified (phosphoserine). Position 889 is a phosphothreonine (Thr889). Ser893 and Ser895 each carry phosphoserine. Position 916 is a phosphothreonine (Thr916). 2 positions are modified to phosphoserine: Ser927 and Ser931. A Phosphothreonine modification is found at Thr934. The chain crosses the membrane as a helical span at residues 973–993 (KACGVLGVVLFFLFMILTRVF). The ABC transmembrane type-1 2 domain maps to 980–1265 (VVLFFLFMIL…IVRTTVTIET (286 aa)). Topologically, residues 994 to 1030 (DLAENFWLKYWSESNEKNGSNERVWMFVGVYSLIGVA) are vacuolar. Residue Asn1011 is glycosylated (N-linked (GlcNAc...) asparagine). The helical transmembrane segment at 1031 to 1052 (SAAFNNLRSIMMLLYCSIRGSK) threads the bilayer. The Cytoplasmic segment spans residues 1053 to 1095 (KLHESMAKSVIRSPMTFFETTPVGRIINRFSSDMDAVDSNLQY). The chain crosses the membrane as a helical span at residues 1096–1116 (IFSFFFKSILTYLVTVILVGY). Asn1117 is a topological domain (vacuolar). A helical transmembrane segment spans residues 1118–1138 (MPWFLVFNMFLVVIYIYYQTF). At 1139–1209 (YIVLSRELKR…STNRWLSVRL (71 aa)) the chain is on the cytoplasmic side. Residues 1210–1230 (QTIGATIVLATAILALATMNT) form a helical membrane-spanning segment. The Vacuolar segment spans residues 1231-1235 (KRQLS). Residues 1236 to 1256 (SGMVGLLMSYSLEVTGSLTWI) traverse the membrane as a helical segment. At 1257–1559 (VRTTVTIETN…SLCEKGGYLK (303 aa)) the chain is on the cytoplasmic side. An ABC transporter 2 domain is found at 1302–1553 (IEFKNYSTKY…KTSIFYSLCE (252 aa)). Position 1336–1343 (1336–1343 (GRTGAGKS)) interacts with ATP. The span at 1420–1433 (HLEKMLHSKPRGDD) shows a compositional bias: basic and acidic residues. The tract at residues 1420 to 1439 (HLEKMLHSKPRGDDSNEEDG) is disordered.

This sequence belongs to the ABC transporter superfamily.

The protein localises to the vacuole membrane. Functionally, cooperates for the ATP-dependent vacuolar transport of bilirubin and glutathione conjugates. The sequence is that of Bile pigment transporter 1 (BPT1) from Saccharomyces cerevisiae (strain ATCC 204508 / S288c) (Baker's yeast).